The following is a 312-amino-acid chain: Ribosomal RNA small subunit methyltransferase H (312 aa).

Residues 33-35 (AGH), Asp-53, Phe-79, Asp-100, and Gln-107 contribute to the S-adenosyl-L-methionine site.

The protein belongs to the methyltransferase superfamily. RsmH family.

It localises to the cytoplasm. The enzyme catalyses cytidine(1402) in 16S rRNA + S-adenosyl-L-methionine = N(4)-methylcytidine(1402) in 16S rRNA + S-adenosyl-L-homocysteine + H(+). Its function is as follows. Specifically methylates the N4 position of cytidine in position 1402 (C1402) of 16S rRNA. The chain is Ribosomal RNA small subunit methyltransferase H from Clostridium acetobutylicum (strain ATCC 824 / DSM 792 / JCM 1419 / IAM 19013 / LMG 5710 / NBRC 13948 / NRRL B-527 / VKM B-1787 / 2291 / W).